The chain runs to 314 residues: Acetyl-coenzyme A carboxylase carboxyl transferase subunit beta (314 aa).

In terms of domain architecture, CoA carboxyltransferase N-terminal spans 37–307 (LWQKCPACDT…MSLPSIDSEA (271 aa)). Residues C41, C44, C60, and C63 each contribute to the Zn(2+) site. The C4-type zinc-finger motif lies at 41-63 (CPACDTLTYTKDLQQNWQVCPSC).

The protein belongs to the AccD/PCCB family. In terms of assembly, acetyl-CoA carboxylase is a heterohexamer composed of biotin carboxyl carrier protein (AccB), biotin carboxylase (AccC) and two subunits each of ACCase subunit alpha (AccA) and ACCase subunit beta (AccD). The cofactor is Zn(2+).

The protein localises to the cytoplasm. It carries out the reaction N(6)-carboxybiotinyl-L-lysyl-[protein] + acetyl-CoA = N(6)-biotinyl-L-lysyl-[protein] + malonyl-CoA. Its pathway is lipid metabolism; malonyl-CoA biosynthesis; malonyl-CoA from acetyl-CoA: step 1/1. In terms of biological role, component of the acetyl coenzyme A carboxylase (ACC) complex. Biotin carboxylase (BC) catalyzes the carboxylation of biotin on its carrier protein (BCCP) and then the CO(2) group is transferred by the transcarboxylase to acetyl-CoA to form malonyl-CoA. This is Acetyl-coenzyme A carboxylase carboxyl transferase subunit beta from Synechococcus sp. (strain JA-2-3B'a(2-13)) (Cyanobacteria bacterium Yellowstone B-Prime).